The chain runs to 483 residues: 6-phosphogluconate dehydrogenase, decarboxylating (483 aa).

NADP(+) is bound by residues 10 to 15 (GLAVMG) and 33 to 35 (NRT). Lys-38 carries the N6-acetyllysine modification. Ser-57 is subject to Phosphoserine. N6-acetyllysine is present on Lys-59. NADP(+) is bound by residues 75–77 (VKA) and Asn-103. Substrate is bound by residues Asn-103 and 129–131 (SGG). Phosphoserine is present on Ser-129. Lys-184 (proton acceptor) is an active-site residue. 187–188 (HN) provides a ligand contact to substrate. Glu-191 (proton donor) is an active-site residue. Substrate is bound by residues Tyr-192, Lys-261, Arg-288, Arg-447, and His-453. Residue 478 to 481 (SSSY) participates in NADP(+) binding.

This sequence belongs to the 6-phosphogluconate dehydrogenase family. In terms of assembly, homodimer.

The protein localises to the cytoplasm. It carries out the reaction 6-phospho-D-gluconate + NADP(+) = D-ribulose 5-phosphate + CO2 + NADPH. Its pathway is carbohydrate degradation; pentose phosphate pathway; D-ribulose 5-phosphate from D-glucose 6-phosphate (oxidative stage): step 3/3. Catalyzes the oxidative decarboxylation of 6-phosphogluconate to ribulose 5-phosphate and CO(2), with concomitant reduction of NADP to NADPH. In Mus musculus (Mouse), this protein is 6-phosphogluconate dehydrogenase, decarboxylating (Pgd).